The following is a 142-amino-acid chain: Large ribosomal subunit protein uL16 (142 aa).

Belongs to the universal ribosomal protein uL16 family. As to quaternary structure, part of the 50S ribosomal subunit.

Its function is as follows. Binds 23S rRNA and is also seen to make contacts with the A and possibly P site tRNAs. The sequence is that of Large ribosomal subunit protein uL16 from Thermosipho melanesiensis (strain DSM 12029 / CIP 104789 / BI429).